Reading from the N-terminus, the 114-residue chain is Chaperone protein YscY (114 aa).

Binds to YscX.

It localises to the cytoplasm. Its function is as follows. Required for Yop secretion. Functions probably as a chaperone which stabilizes YscX within the cell, before its secretion. In Yersinia enterocolitica, this protein is Chaperone protein YscY (yscY).